Here is a 346-residue protein sequence, read N- to C-terminus: Protein RecA (346 aa).

Residue 65 to 72 coordinates ATP; it reads GPESSGKT.

This sequence belongs to the RecA family.

The protein resides in the cytoplasm. Functionally, can catalyze the hydrolysis of ATP in the presence of single-stranded DNA, the ATP-dependent uptake of single-stranded DNA by duplex DNA, and the ATP-dependent hybridization of homologous single-stranded DNAs. It interacts with LexA causing its activation and leading to its autocatalytic cleavage. The protein is Protein RecA of Enterococcus mundtii.